A 1191-amino-acid chain; its full sequence is Phosphatidylinositol 3,4,5-trisphosphate 5-phosphatase 1 (1191 aa).

Residues 8–104 (WNHGNITRSK…GLVTHLQYPV (97 aa)) form the SH2 domain. The segment at 122–148 (SVMSPPELPPRNIPMSAGPSEAKDLPL) is disordered. Residues 127 to 132 (PELPPR) carry the SH3-binding 1 motif. At Ser-246 the chain carries Phosphoserine. An NPXY motif 1 motif is present at residues 915–918 (NPNY). The residue at position 918 (Tyr-918) is a Phosphotyrosine. The residue at position 935 (Ser-935) is a Phosphoserine. The residue at position 945 (Tyr-945) is a Phosphotyrosine. Disordered regions lie at residues 947-994 (QLPK…EARP) and 1021-1191 (YGSV…TAMQ). The span at 962–972 (PPTPPSQPPLS) shows a compositional bias: pro residues. Phosphothreonine is present on Thr-964. Residues Ser-967 and Ser-972 each carry the phosphoserine modification. Residues 970 to 975 (PLSPKK) carry the SH3-binding 2 motif. Residues 1015 to 1029 (MFENPLYGSVSSFPK) are interaction with DAB2. The NPXY motif 2 motif lies at 1018–1021 (NPLY). Tyr-1021 carries the post-translational modification Phosphotyrosine. The span at 1032–1046 (PRKEQESPKMLRKEP) shows a compositional bias: basic and acidic residues. The short motif at 1039–1050 (PKMLRKEPPPCP) is the SH3-binding 3 element. A compositionally biased stretch (pro residues) spans 1141-1150 (IPAPRPPLPV). Positions 1162–1184 (KGRDYRDNTELPHHGKHRQEEGL) are enriched in basic and acidic residues.

It belongs to the inositol 1,4,5-trisphosphate 5-phosphatase family. In terms of assembly, interacts with tyrosine phosphorylated form of SHC1. Interacts with tyrosine phosphorylated form of DOK1. Interacts with tyrosine phosphorylated form of DOK3. Interacts with tyrosine phosphorylated form of SLAMF1/CD150. Interacts with PTPN11/SHP-2 in response to IL-3. Interacts with receptor EPOR. Interacts with receptors MS4A2/FCER1B and FCER1G. Interacts with receptors FCGR2B and FCGR3. Interacts with receptor FCGR2A, leading to regulate gene expression during the phagocytic process. Interacts with GRB2. Interacts with PLCG1. Interacts with tyrosine kinases SRC and TEC. Interacts with CRKL. Interacts with c-Met/MET. Interacts with MILR1 (tyrosine-phosphorylated). Isoform 5 interacts with IL6ST/gp130. Can weakly interact (via NPXY motif 2) with DAB2 (via PID domain); the interaction is impaired by tyrosine phosphorylation of the NPXY motif. Interacts (via SH2 domain) with tyrosine phosphorylated KLRC1 (via ITIM). Interacts with MPL/TPOR. Post-translationally, tyrosine phosphorylated by the members of the SRC family after exposure to a diverse array of extracellular stimuli such as cytokines, growth factors, antibodies, chemokines, integrin ligands and hypertonic and oxidative stress. Phosphorylated upon IgG receptor FCGR2B-binding. In terms of tissue distribution, specifically expressed in immune and hematopoietic cells. Levels vary considerably within this compartment. Lost during erythropoiesis when erythroid cells become Ter119+. Increases substantially with T-cell maturation and when resting B-cells are activated. Also present in mature granulocytes, monocyte/macrophages, mast cells and platelets. Isoform 5 is the only form expressed in embryonic stem (ES) cells and is coexpressed with other isoforms in hematopoietic stem cells, and disappears with differentiation.

The protein resides in the cytoplasm. It localises to the cell membrane. The protein localises to the membrane raft. It is found in the cytoskeleton. It catalyses the reaction a 1,2-diacyl-sn-glycero-3-phospho-(1D-myo-inositol-3,4,5-trisphosphate) + H2O = a 1,2-diacyl-sn-glycero-3-phospho-(1D-myo-inositol-3,4-bisphosphate) + phosphate. The catalysed reaction is a 1,2-diacyl-sn-glycero-3-phospho-(1D-myo-inositol-4,5-bisphosphate) + H2O = a 1,2-diacyl-sn-glycero-3-phospho-(1D-myo-inositol 4-phosphate) + phosphate. It carries out the reaction 1D-myo-inositol 1,3,4,5-tetrakisphosphate + H2O = 1D-myo-inositol 1,3,4-trisphosphate + phosphate. Activated upon translocation to the sites of synthesis of PtdIns(3,4,5)P3 in the membrane. Functionally, phosphatidylinositol (PtdIns) phosphatase that specifically hydrolyzes the 5-phosphate of phosphatidylinositol-3,4,5-trisphosphate (PtdIns(3,4,5)P3) to produce PtdIns(3,4)P2, thereby negatively regulating the PI3K (phosphoinositide 3-kinase) pathways. Also able to hydrolyze the 5-phosphate of phosphatidylinositol-4,5-bisphosphate (PtdIns(4,5)P3) and inositol 1,3,4,5-tetrakisphosphate. Acts as a negative regulator of B-cell antigen receptor signaling. Mediates signaling from the FC-gamma-RIIB receptor (FCGR2B), playing a central role in terminating signal transduction from activating immune/hematopoietic cell receptor systems. Acts as a negative regulator of myeloid cell proliferation/survival and chemotaxis, mast cell degranulation, immune cells homeostasis, integrin alpha-IIb/beta-3 signaling in platelets and JNK signaling in B-cells. Regulates proliferation of osteoclast precursors, macrophage programming, phagocytosis and activation and is required for endotoxin tolerance. Involved in the control of cell-cell junctions, CD32a signaling in neutrophils and modulation of EGF-induced phospholipase C activity. Key regulator of neutrophil migration, by governing the formation of the leading edge and polarization required for chemotaxis. Modulates FCGR3/CD16-mediated cytotoxicity in NK cells. Mediates the activin/TGF-beta-induced apoptosis through its Smad-dependent expression. This chain is Phosphatidylinositol 3,4,5-trisphosphate 5-phosphatase 1 (Inpp5d), found in Mus musculus (Mouse).